A 264-amino-acid polypeptide reads, in one-letter code: NFAT activation molecule 1 (264 aa).

A signal peptide spans 1–37 (MESWLLRRGARVRCLHPPSWLPAWCFLCLLPVPQTLQ). The Extracellular segment spans residues 38–159 (LTGLVSLTHT…QPPAFKVQEA (122 aa)). An Ig-like V-type domain is found at 49 to 145 (LPIMVSLANT…QSDGVVILVR (97 aa)). Cys-64 and Cys-110 are disulfide-bonded. Residues Asn-105 and Asn-118 are each glycosylated (N-linked (GlcNAc...) asparagine). Residues 160-180 (LMLGFTSLMSVLGVLGTALLL) traverse the membrane as a helical segment. At 181–264 (WKKKQISVLG…NEFNLVYENL (84 aa)) the chain is on the cytoplasmic side. Residues 212–232 (ESVYTSLQRRETEVYACMKEE) form the ITAM domain. 2 positions are modified to phosphotyrosine: Tyr-215 and Tyr-226.

In terms of assembly, no direct interaction with the B-cell antigen receptor (BCR). Interacts with SYK; probably involved in BCR signaling. Interacts with ZAP70. In terms of processing, N-glycosylated. In terms of tissue distribution, highly expressed in the spleen, expressed by both B- and CD4+ and CD8+ T-cells, as well as non-T- and non-B-cells, including macrophages and neutrophils. Expressed at low levels, if any, in non-immune tissue.

It localises to the cell membrane. May function in immune system as a receptor which activates via the calcineurin/NFAT-signaling pathway the downstream cytokine gene promoters. Activates the transcription of IL-13 and TNF-alpha promoters. May be involved in the regulation of B-cell, but not T-cell, development. The polypeptide is NFAT activation molecule 1 (Nfam1) (Mus musculus (Mouse)).